Consider the following 1788-residue polypeptide: Glutamine and serine-rich protein 1 (1788 aa).

Residues methionine 1–alanine 53 show a composition bias toward low complexity. Disordered regions lie at residues methionine 1–glutamine 69, threonine 472–threonine 498, and serine 532–aspartate 617. Composition is skewed to polar residues over residues proline 60 to glutamine 69, valine 478 to leucine 492, serine 532 to proline 569, and valine 576 to proline 594. Serine 670 and serine 940 each carry phosphoserine. Position 1003 is a phosphothreonine (threonine 1003). Phosphoserine is present on serine 1041. Disordered stretches follow at residues glutamine 1104–tyrosine 1163 and isoleucine 1234–serine 1264. Lysine 1112 participates in a covalent cross-link: Glycyl lysine isopeptide (Lys-Gly) (interchain with G-Cter in SUMO2). The span at proline 1126–glycine 1136 shows a compositional bias: basic and acidic residues. Lysine 1137 is covalently cross-linked (Glycyl lysine isopeptide (Lys-Gly) (interchain with G-Cter in SUMO2)). A phosphoserine mark is found at serine 1262, serine 1281, and serine 1282. The residue at position 1394 (threonine 1394) is a Phosphothreonine. Serine 1401 is modified (phosphoserine). The segment at valine 1494 to serine 1588 is disordered. The segment covering isoleucine 1510–lysine 1537 has biased composition (low complexity). The span at isoleucine 1545–phenylalanine 1561 shows a compositional bias: basic and acidic residues. The segment covering serine 1562–serine 1575 has biased composition (low complexity).

Interacts with TET1.

Its subcellular location is the chromosome. In terms of biological role, plays an essential role in the protection and maintenance of transcriptional and developmental programs. Protects many bivalent promoters and poised enhancers from hypermethylation, showing a marked preference for these regulatory elements over other types of promoters or enhancers. Mechanistically, cooperates with TET1 and binds to DNA in a common complex to inhibit the binding of DNMT3A/3B and therefore de novo methylation. This Mus musculus (Mouse) protein is Glutamine and serine-rich protein 1.